The chain runs to 317 residues: WSCD family member CG9164 (317 aa).

A helical membrane pass occupies residues 8–28 (FFGVSATIIIYIGGVLFLSMN). Residues asparagine 151, asparagine 227, and asparagine 233 are each glycosylated (N-linked (GlcNAc...) asparagine).

This sequence belongs to the WSCD family.

It is found in the membrane. In Drosophila melanogaster (Fruit fly), this protein is WSCD family member CG9164.